The sequence spans 243 residues: Probable transcriptional regulatory protein Bpet3099 (243 aa).

The interval methionine 1–arginine 21 is disordered.

This sequence belongs to the TACO1 family.

It is found in the cytoplasm. In Bordetella petrii (strain ATCC BAA-461 / DSM 12804 / CCUG 43448), this protein is Probable transcriptional regulatory protein Bpet3099.